We begin with the raw amino-acid sequence, 82 residues long: Omega-conotoxin-like TxO6 (82 aa).

The first 22 residues, 1-22, serve as a signal peptide directing secretion; it reads MKLTCVVIVAVLFLTAWTLVMA. Positions 23 to 50 are excised as a propeptide; that stretch reads DDSNNGLANLFSKSRDEMEDPEAAKLEK. Disulfide bonds link Cys53/Cys71, Cys60/Cys76, and Cys70/Cys81.

This sequence belongs to the conotoxin O1 superfamily. As to expression, expressed by the venom duct.

It is found in the secreted. Functionally, omega-conotoxins act at presynaptic membranes, they bind and block voltage-gated calcium channels (Cav). The chain is Omega-conotoxin-like TxO6 from Conus textile (Cloth-of-gold cone).